The primary structure comprises 310 residues: Aspartate carbamoyltransferase catalytic subunit (310 aa).

Residues arginine 57 and threonine 58 each coordinate carbamoyl phosphate. Lysine 86 serves as a coordination point for L-aspartate. Carbamoyl phosphate contacts are provided by arginine 107, histidine 135, and glutamine 138. Residues arginine 168 and arginine 229 each contribute to the L-aspartate site. Residues leucine 268 and proline 269 each contribute to the carbamoyl phosphate site.

Belongs to the aspartate/ornithine carbamoyltransferase superfamily. ATCase family. Heterooligomer of catalytic and regulatory chains.

The enzyme catalyses carbamoyl phosphate + L-aspartate = N-carbamoyl-L-aspartate + phosphate + H(+). It participates in pyrimidine metabolism; UMP biosynthesis via de novo pathway; (S)-dihydroorotate from bicarbonate: step 2/3. Functionally, catalyzes the condensation of carbamoyl phosphate and aspartate to form carbamoyl aspartate and inorganic phosphate, the committed step in the de novo pyrimidine nucleotide biosynthesis pathway. In Thermococcus kodakarensis (strain ATCC BAA-918 / JCM 12380 / KOD1) (Pyrococcus kodakaraensis (strain KOD1)), this protein is Aspartate carbamoyltransferase catalytic subunit.